Reading from the N-terminus, the 133-residue chain is Protein Wnt-4 (133 aa).

Residue Ser1 is the site of O-palmitoleoyl serine; by PORCN attachment. Disulfide bonds link Cys69–Cys114 and Cys99–Cys109. Asn100 carries an N-linked (GlcNAc...) asparagine glycan.

It belongs to the Wnt family. Post-translationally, palmitoleoylation is required for efficient binding to frizzled receptors. Depalmitoleoylation leads to Wnt signaling pathway inhibition.

It localises to the secreted. Its subcellular location is the extracellular space. The protein localises to the extracellular matrix. Its function is as follows. Ligand for members of the frizzled family of seven transmembrane receptors. Plays an important role in embryonic development. This is Protein Wnt-4 (WNT-4) from Strongylocentrotus purpuratus (Purple sea urchin).